The chain runs to 223 residues: Cytidylate kinase (223 aa).

12 to 20 serves as a coordination point for ATP; sequence GPSGVGKGT.

The protein belongs to the cytidylate kinase family. Type 1 subfamily.

It is found in the cytoplasm. The enzyme catalyses CMP + ATP = CDP + ADP. It carries out the reaction dCMP + ATP = dCDP + ADP. In Xylella fastidiosa (strain M23), this protein is Cytidylate kinase.